The following is a 343-amino-acid chain: F-box/kelch-repeat protein At3g08810 (343 aa).

Residues 1–15 (MSYPERKRKRSRWSK) are compositionally biased toward basic residues. The interval 1 to 25 (MSYPERKRKRSRWSKPHSTQNPSPS) is disordered. Positions 20-66 (QNPSPSLPDDVLLSIFARVSRLYYPTLSHVSESFRSLLASPELYKAR) constitute an F-box domain. Kelch repeat units follow at residues 134 to 181 (DIYN…VRDG), 183 to 224 (QGGH…LPDS), and 225 to 271 (YCVI…VILA).

The polypeptide is F-box/kelch-repeat protein At3g08810 (Arabidopsis thaliana (Mouse-ear cress)).